The sequence spans 1083 residues: MASNAALQGEDIPQPQESPPDTACMEAQKWIEQVTGKSFGDRDFRTGLENGILLCELLNAIKPGLVKKINRLPTPIAGLDNITLFLRGCKELGLKESQLFDPGDLQDTANRTTGRTSDCNRKLRNVLVTVYWLGKAANGCSSFSGTNLDLKEFEGLLAQIRKENEEIESPKRSIRDSGYIDCWDSERSDSLSPPRHGRDDSFDSLDSFGSRSQQTPSPDVVLRGSSDGRGSDSESDLPHRRIPDVRKDDMSARRVSFGENKAFVPFNQYLPNKNNQTAYIPAPLRKKKAEREDYRKSWSTATSPLGGERPFRSMSMCDMRYEEEGSMLPHSRAHHEHLQHVNSLLKEEDDTWQDDLARWKTRRRSASQDLIKKEEERKKMERLMSGDSELSDRRKSIKTYREIVEEKERREKELHVAYKNAKTRGEAERILKSYIEKFTISEAVLEGLVMPKILERSQSVEPSLLSSSEDPNPLKYLRQQSLPSPKYTSTVEATVTPSSPCESKSPTGLISPSKNIISKTVPMLTAKPYSQPKNTQEVLKTFKVDGKVNLNGVEEQKGKESGSQTFAAPSLTRSQMFEGVARVDAPVVETKQDVASIKLNLARPNTLNSLHESNSLCEDRNHISQKDEPDSFVQEESVHSVEQLSEGNTQSNSTTQAVPAVSSIEIPPLTVNGKDTEDKRKVEAAELIMHWSLDSNYKEAKKNSLPPLKSSENVEESSKIKENESSHKVQLNITLQTRNAWRRSQFFLQSVDTECTEKSPALVPNLSSPNRSCTWDPEEERKRQEKWQQEQERLLQERYQKEQEKLKEEWEKAQKEVEEEERKYYEEERKIIEDTVVPLTLSPNSNVHFNISERNGNFIPVLPDHAKRDQENNNGQLMAEPNRVIKNEIHMHSNVTQQQILYAHERSMLAAEETQIKGKTEKWEAEPCNHVQSNECNTPTRLTLQAGCKQVMLSESCDLGSPKTPVDENAVHHNMSSIISTRGIDSKEETLNSSQSTSQCQSPNRSVSGKKLCSTCGLPLGKGAAMIIETLSLYFHIQCFKCGLCKGQLGDATTGTDVRIRNGLLNCNDCYVKSRTAGHPTPL.

3 disordered regions span residues 1–22, 185–248, and 291–311; these read MASN…PPDT, SERS…VRKD, and REDY…ERPF. A Calponin-homology (CH) domain is found at 21-138; the sequence is DTACMEAQKW…TVYWLGKAAN (118 aa). Residues 229-248 are compositionally biased toward basic and acidic residues; sequence RGSDSESDLPHRRIPDVRKD. Residues 356-424 are a coiled coil; the sequence is LARWKTRRRS…HVAYKNAKTR (69 aa). Residues 462–474 show a composition bias toward low complexity; it reads PSLLSSSEDPNPL. Disordered stretches follow at residues 462 to 512, 625 to 661, 698 to 725, and 759 to 779; these read PSLL…LISP, QKDE…VPAV, KEAK…ENES, and SPAL…DPEE. Composition is skewed to polar residues over residues 478–512 and 640–657; these read RQQS…LISP and SVEQ…TTQA. Basic and acidic residues predominate over residues 716 to 725; sequence ESSKIKENES. A coiled-coil region spans residues 784–835; sequence QEKWQQEQERLLQERYQKEQEKLKEEWEKAQKEVEEEERKYYEEERKIIEDT. The segment at 987–1006 is disordered; the sequence is KEETLNSSQSTSQCQSPNRS. Residues 991 to 1006 show a composition bias toward polar residues; the sequence is LNSSQSTSQCQSPNRS. One can recognise an LIM zinc-binding domain in the interval 1011–1077; that stretch reads KLCSTCGLPL…NDCYVKSRTA (67 aa).

It belongs to the LIMCH1 family.

The protein resides in the cytoplasm. It localises to the cytoskeleton. Its subcellular location is the stress fiber. Actin stress fibers-associated protein that activates non-muscle myosin IIa. Through the activation of non-muscle myosin IIa, positively regulates actin stress fibers assembly and stabilizes focal adhesions. It therefore negatively regulates cell spreading and cell migration. This is LIM and calponin homology domains-containing protein 1 (limch1) from Xenopus laevis (African clawed frog).